We begin with the raw amino-acid sequence, 359 residues long: N-acetyl-gamma-glutamyl-phosphate reductase (359 aa).

Cysteine 162 is a catalytic residue.

Belongs to the NAGSA dehydrogenase family. Type 1 subfamily.

Its subcellular location is the cytoplasm. The enzyme catalyses N-acetyl-L-glutamate 5-semialdehyde + phosphate + NADP(+) = N-acetyl-L-glutamyl 5-phosphate + NADPH + H(+). It functions in the pathway amino-acid biosynthesis; L-arginine biosynthesis; N(2)-acetyl-L-ornithine from L-glutamate: step 3/4. Functionally, catalyzes the NADPH-dependent reduction of N-acetyl-5-glutamyl phosphate to yield N-acetyl-L-glutamate 5-semialdehyde. This is N-acetyl-gamma-glutamyl-phosphate reductase from Prochlorococcus marinus (strain NATL1A).